A 280-amino-acid polypeptide reads, in one-letter code: 3-hydroxyanthranilate 3,4-dioxygenase (280 aa).

The tract at residues 1 to 160 is domain A (catalytic); sequence MAIPVNVKKW…SEQYKSGKPD (160 aa). Arg-43 contacts O2. His-47, Glu-53, and His-91 together coordinate Fe cation. Glu-53 is a binding site for substrate. Substrate contacts are provided by Arg-95 and Glu-105. Residues 161-177 form a linker region; it reads PAQPIGKMPFFLNTEQV. A domain B region spans residues 178–280; sequence MEPFSFQNWL…IALSTSQVPA (103 aa).

This sequence belongs to the 3-HAO family. As to quaternary structure, monomer. Fe(2+) is required as a cofactor.

Its subcellular location is the cytoplasm. The protein localises to the cytosol. It carries out the reaction 3-hydroxyanthranilate + O2 = (2Z,4Z)-2-amino-3-carboxymuconate 6-semialdehyde. It functions in the pathway cofactor biosynthesis; NAD(+) biosynthesis; quinolinate from L-kynurenine: step 3/3. Catalyzes the oxidative ring opening of 3-hydroxyanthranilate to 2-amino-3-carboxymuconate semialdehyde, which spontaneously cyclizes to quinolinate. In Xenopus tropicalis (Western clawed frog), this protein is 3-hydroxyanthranilate 3,4-dioxygenase (haao).